Consider the following 392-residue polypeptide: GTPase Obg (392 aa).

Residues 1-159 (MKFVDEATIK…RELRLELLLL (159 aa)) form the Obg domain. The OBG-type G domain maps to 160-333 (ADVGMLGLPN…VCNELSDFMD (174 aa)). GTP contacts are provided by residues 166–173 (GLPNAGKS), 191–195 (FTTLI), 213–216 (DIPG), 283–286 (NKTD), and 314–316 (AAV). Mg(2+) contacts are provided by serine 173 and threonine 193. The disordered stretch occupies residues 364 to 392 (GKNVVTEDGDDDDDWDDEEDDGHVIYARD). The span at 370 to 384 (EDGDDDDDWDDEEDD) shows a compositional bias: acidic residues.

It belongs to the TRAFAC class OBG-HflX-like GTPase superfamily. OBG GTPase family. As to quaternary structure, monomer. It depends on Mg(2+) as a cofactor.

Its subcellular location is the cytoplasm. Functionally, an essential GTPase which binds GTP, GDP and possibly (p)ppGpp with moderate affinity, with high nucleotide exchange rates and a fairly low GTP hydrolysis rate. Plays a role in control of the cell cycle, stress response, ribosome biogenesis and in those bacteria that undergo differentiation, in morphogenesis control. The sequence is that of GTPase Obg from Aliivibrio salmonicida (strain LFI1238) (Vibrio salmonicida (strain LFI1238)).